An 83-amino-acid chain; its full sequence is Exodeoxyribonuclease 7 small subunit (83 aa).

It belongs to the XseB family. As to quaternary structure, heterooligomer composed of large and small subunits.

The protein localises to the cytoplasm. The catalysed reaction is Exonucleolytic cleavage in either 5'- to 3'- or 3'- to 5'-direction to yield nucleoside 5'-phosphates.. In terms of biological role, bidirectionally degrades single-stranded DNA into large acid-insoluble oligonucleotides, which are then degraded further into small acid-soluble oligonucleotides. The chain is Exodeoxyribonuclease 7 small subunit from Rhodopseudomonas palustris (strain BisB5).